The following is a 586-amino-acid chain: MRKHPQTATKHLFVSGGVASSLGKGLTASSLGQLLTARGLHVTMQKLDPYLNVDPGTMNPFQHGEVFVTEDGAETDLDVGHYERFLDRNLPGSANVTTGQVYSTVIAKERRGEYLGDTVQVIPHITDEIKRRILAMAQPDADGNRPDVVITEIGGTVGDIESQPFLEAARQVRHYLGREDVFFLHVSLVPYLAPSGELKTKPTQHSVAALRSIGITPDALILRCDRDVPEALKNKIALMCDVDIDGVISTPDAPSIYDIPKVLHREELDAFVVRRLNLPFRDVDWTEWDDLLRRVHEPHETVRIALVGKYVELSDAYLSVAEALRAGGFKHRAKVEICWVASDGCETTSGAAAALGDVHGVLIPGGFGIRGIEGKIGAIAYARARGLPVLGLCLGLQCIVIEAARSVGLTNANSAEFDPDTPDPVIATMPDQEEIVAGEADLGGTMRLGSYPAVLEPDSVVAQAYQTTQVSERHRHRYEVNNAYRDKIAESGLRFSGTSPDGHLVEFVEYPPDRHPFVVGTQAHPELKSRPTRPHPLFVAFVGAAIDYKAGELLPVEIPEIPEHTPNGSSHRDGVGQPLPEPASRG.

Positions 1 to 278 (MRKHPQTATK…DAFVVRRLNL (278 aa)) are amidoligase domain. Ser20 contributes to the CTP binding site. Ser20 provides a ligand contact to UTP. ATP-binding positions include 21-26 (SLGKGL) and Asp78. Residues Asp78 and Glu152 each coordinate Mg(2+). Residues 159 to 161 (DIE), 199 to 204 (KTKPTQ), and Lys235 each bind CTP. Residues 199–204 (KTKPTQ) and Lys235 each bind UTP. Positions 303–551 (RIALVGKYVE…VGAAIDYKAG (249 aa)) constitute a Glutamine amidotransferase type-1 domain. Gly366 is a binding site for L-glutamine. Residue Cys393 is the Nucleophile; for glutamine hydrolysis of the active site. L-glutamine contacts are provided by residues 394–397 (LGLQ), Glu416, and Arg477. Catalysis depends on residues His524 and Glu526. Residues 560 to 586 (EIPEHTPNGSSHRDGVGQPLPEPASRG) are disordered.

The protein belongs to the CTP synthase family. Homotetramer.

It catalyses the reaction UTP + L-glutamine + ATP + H2O = CTP + L-glutamate + ADP + phosphate + 2 H(+). It carries out the reaction L-glutamine + H2O = L-glutamate + NH4(+). The catalysed reaction is UTP + NH4(+) + ATP = CTP + ADP + phosphate + 2 H(+). Its pathway is pyrimidine metabolism; CTP biosynthesis via de novo pathway; CTP from UDP: step 2/2. Its activity is regulated as follows. Allosterically activated by GTP, when glutamine is the substrate; GTP has no effect on the reaction when ammonia is the substrate. The allosteric effector GTP functions by stabilizing the protein conformation that binds the tetrahedral intermediate(s) formed during glutamine hydrolysis. Inhibited by the product CTP, via allosteric rather than competitive inhibition. Its function is as follows. Catalyzes the ATP-dependent amination of UTP to CTP with either L-glutamine or ammonia as the source of nitrogen. Regulates intracellular CTP levels through interactions with the four ribonucleotide triphosphates. This is CTP synthase from Mycobacterium tuberculosis (strain ATCC 25177 / H37Ra).